The chain runs to 233 residues: 5'-methylthioadenosine/S-adenosylhomocysteine nucleosidase (233 aa).

The active-site Proton acceptor is the Glu12. Residues Gly78, Ile156, and 177–178 (ME) each bind substrate. Asp201 serves as the catalytic Proton donor.

It belongs to the PNP/UDP phosphorylase family. MtnN subfamily.

It carries out the reaction S-adenosyl-L-homocysteine + H2O = S-(5-deoxy-D-ribos-5-yl)-L-homocysteine + adenine. The enzyme catalyses S-methyl-5'-thioadenosine + H2O = 5-(methylsulfanyl)-D-ribose + adenine. It catalyses the reaction 5'-deoxyadenosine + H2O = 5-deoxy-D-ribose + adenine. It functions in the pathway amino-acid biosynthesis; L-methionine biosynthesis via salvage pathway; S-methyl-5-thio-alpha-D-ribose 1-phosphate from S-methyl-5'-thioadenosine (hydrolase route): step 1/2. In terms of biological role, catalyzes the irreversible cleavage of the glycosidic bond in both 5'-methylthioadenosine (MTA) and S-adenosylhomocysteine (SAH/AdoHcy) to adenine and the corresponding thioribose, 5'-methylthioribose and S-ribosylhomocysteine, respectively. Also cleaves 5'-deoxyadenosine, a toxic by-product of radical S-adenosylmethionine (SAM) enzymes, into 5-deoxyribose and adenine. This chain is 5'-methylthioadenosine/S-adenosylhomocysteine nucleosidase, found in Listeria welshimeri serovar 6b (strain ATCC 35897 / DSM 20650 / CCUG 15529 / CIP 8149 / NCTC 11857 / SLCC 5334 / V8).